Consider the following 111-residue polypeptide: X antigen family member 3 (111 aa).

The interval Met-1 to Val-111 is disordered. Over residues Pro-29–Pro-40 the composition is skewed to acidic residues. Over residues Glu-97 to Val-111 the composition is skewed to basic and acidic residues.

This sequence belongs to the GAGE family.

The sequence is that of X antigen family member 3 (XAGE3) from Homo sapiens (Human).